The primary structure comprises 170 residues: MLENYQNLVWLGLSISKSVISLLEKRKLPWIMAKEEIRGPLPGYFKVSEMTISQEPKAKTRTLFGKDVPGAEIKELSAKRAINEVLSQFDTVIKCTRNVCKECGNLYCHNMQLTLHKRNHTQKKCNQCLDCGKYFTRQSTLIQHQRIHTGERPYKCNECIKTFNQRAHLT.

One can recognise a KRAB domain in the interval 1 to 42; that stretch reads MLENYQNLVWLGLSISKSVISLLEKRKLPWIMAKEEIRGPLP. C2H2-type zinc fingers lie at residues 98-120 and 126-148; these read NVCKECGNLYCHNMQLTLHKRNH and NQCLDCGKYFTRQSTLIQHQRIH. The segment at 154–170 adopts a C2H2-type 3; degenerate zinc-finger fold; sequence YKCNECIKTFNQRAHLT.

The protein belongs to the krueppel C2H2-type zinc-finger protein family.

It is found in the nucleus. Its function is as follows. May be involved in transcriptional regulation. The chain is Putative zinc finger protein 542 (ZNF542P) from Homo sapiens (Human).